The following is a 767-amino-acid chain: E3 ubiquitin-protein ligase pub1 (767 aa).

The C2 domain maps to 1 to 111 (MSNSAQSRRI…AIGGDEMLTR (111 aa)). The span at 138 to 158 (LQVPSSAASGARTQRTSITND) shows a compositional bias: polar residues. Disordered regions lie at residues 138–216 (LQVP…RRTD) and 252–306 (SASS…RPYF). A Phosphothreonine modification is found at Thr156. The segment covering 159–176 (PQSSQSSSVSRNPASSRA) has biased composition (low complexity). Ser178 is modified (phosphoserine). Position 180 is a phosphothreonine (Thr180). Over residues 184-194 (APAASPASSEP) the composition is skewed to low complexity. The WW 1 domain maps to 211–236 (WERRTDNLGRTYYVDHNTRSTTWIRP). The segment covering 257–286 (NVTEGVQPSSSNAARRTEASVLTSNATTAG) has biased composition (polar residues). WW domains follow at residues 294-319 (WEQR…WVDP) and 351-376 (WEMR…WDDP). The 305-residue stretch at 463–767 (FLLSHEMFNP…VEETIGFGQE (305 aa)) folds into the HECT domain. Catalysis depends on Cys735, which acts as the Glycyl thioester intermediate.

It is found in the membrane. The protein resides in the cytoplasm. It carries out the reaction S-ubiquitinyl-[E2 ubiquitin-conjugating enzyme]-L-cysteine + [acceptor protein]-L-lysine = [E2 ubiquitin-conjugating enzyme]-L-cysteine + N(6)-ubiquitinyl-[acceptor protein]-L-lysine.. The protein operates within protein modification; protein ubiquitination. E3 ubiquitin-protein ligase which accepts ubiquitin from an E2 ubiquitin-conjugating enzyme in the form of a thioester and then directly transfers the ubiquitin to targeted substrates. Regulates ubiquitination of cdc25. The polypeptide is E3 ubiquitin-protein ligase pub1 (pub1) (Schizosaccharomyces pombe (strain 972 / ATCC 24843) (Fission yeast)).